We begin with the raw amino-acid sequence, 284 residues long: S-formylglutathione hydrolase (284 aa).

A2 carries the post-translational modification N-acetylalanine. 2 residues coordinate substrate: N63 and K67. Catalysis depends on charge relay system residues S152, D229, and H262.

The protein belongs to the esterase D family. As to quaternary structure, homodimer.

It carries out the reaction S-formylglutathione + H2O = formate + glutathione + H(+). With respect to regulation, activity toward p-nitrophenyl acetate inhibited by N-ethylmaleimide, 10-(fluoroethoxyphosphinyl)-N-(biotinamidopentyl)decanamide (FP-biotin), iodoacetamide, CuCl(2) and ZnSO(4), but not by phenylmethylsulfonyl fluoride, EDTA, Mg(2+), Mn(2+), Ca(2+) or paraoxon, an organo-phosphate inhibitor of serine hydrolases. Functionally, serine hydrolase which catalyzes the hydrolysis of S-formylglutathione to glutathione and formic acid. Also hydrolyzes S-acetylglutathione and a range of carboxyesters in vitro. Involved in the detoxification of formaldehyde. The sequence is that of S-formylglutathione hydrolase (SFGH) from Arabidopsis thaliana (Mouse-ear cress).